Reading from the N-terminus, the 236-residue chain is 1-(5-phosphoribosyl)-5-[(5-phosphoribosylamino)methylideneamino] imidazole-4-carboxamide isomerase (236 aa).

Residue aspartate 8 is the Proton acceptor of the active site. The active-site Proton donor is the aspartate 129.

It belongs to the HisA/HisF family.

The protein localises to the cytoplasm. The enzyme catalyses 1-(5-phospho-beta-D-ribosyl)-5-[(5-phospho-beta-D-ribosylamino)methylideneamino]imidazole-4-carboxamide = 5-[(5-phospho-1-deoxy-D-ribulos-1-ylimino)methylamino]-1-(5-phospho-beta-D-ribosyl)imidazole-4-carboxamide. Its pathway is amino-acid biosynthesis; L-histidine biosynthesis; L-histidine from 5-phospho-alpha-D-ribose 1-diphosphate: step 4/9. This Methanospirillum hungatei JF-1 (strain ATCC 27890 / DSM 864 / NBRC 100397 / JF-1) protein is 1-(5-phosphoribosyl)-5-[(5-phosphoribosylamino)methylideneamino] imidazole-4-carboxamide isomerase.